The sequence spans 913 residues: Bifunctional uridylyltransferase/uridylyl-removing enzyme (913 aa).

Positions 1–358 are uridylyltransferase; the sequence is MFNCDVTAID…PDEERPKKQP (358 aa). Positions 359-729 are uridylyl-removing; sequence INARFNQVGD…EHRELALDAV (371 aa). Residues 476 to 592 form the HD domain; the sequence is VDAHTLFLIR…TLFADLVGNV (117 aa). ACT domains lie at 730 to 815 and 838 to 913; these read QVFV…RIPR and IMSL…NDRV.

It belongs to the GlnD family. Mg(2+) is required as a cofactor.

The enzyme catalyses [protein-PII]-L-tyrosine + UTP = [protein-PII]-uridylyl-L-tyrosine + diphosphate. The catalysed reaction is [protein-PII]-uridylyl-L-tyrosine + H2O = [protein-PII]-L-tyrosine + UMP + H(+). Uridylyltransferase (UTase) activity is inhibited by glutamine, while glutamine activates uridylyl-removing (UR) activity. Modifies, by uridylylation and deuridylylation, the PII regulatory proteins (GlnB and homologs), in response to the nitrogen status of the cell that GlnD senses through the glutamine level. Under low glutamine levels, catalyzes the conversion of the PII proteins and UTP to PII-UMP and PPi, while under higher glutamine levels, GlnD hydrolyzes PII-UMP to PII and UMP (deuridylylation). Thus, controls uridylylation state and activity of the PII proteins, and plays an important role in the regulation of nitrogen assimilation and metabolism. The protein is Bifunctional uridylyltransferase/uridylyl-removing enzyme of Psychrobacter cryohalolentis (strain ATCC BAA-1226 / DSM 17306 / VKM B-2378 / K5).